The following is a 487-amino-acid chain: MSSEHISGGGASKTKKHKWSSSQNRPKPMGVSRQERSVPLVSPSNSFASEDDHHMLKISLSSISKLEVRNLKRKLKSELDEVRSLIKRFDPEANPGGSMAKSGVVGRSKKVKTGNGGGKKSGHGADKGTVQIFKNCNSLLTKLMKHKSAWVFNVPVDAKGLGLHDYHNIVKEPMDLGTVKTKLGKSLYKSPLDFAEDVRLTFNNAILYNPIGHDVYRFAELLLNMFEDKWVSIEMQYDNLHRKFKPTRDIEFPAPAPSIAPIVEPLPAIVPSPSPSSPPPPPPPPVAAPVLENRTWEREESMTIPVEPEAVITAPEKAEEEEAPVNNRDLTLEEKRRLSEELQDLPYDKLETVVQIIKKSNPELSQKDDEIELDIDSLDINTLWELYRFVTGYKESLSKKNEAHGFGSERDAESVHNSIQEPTTLVSGTTTSRVTESGKAIRTSSPARQENNASGSSSSNSSSSDSGSCSSDTDSDSSSGRGSDNGN.

The transit peptide at 1-32 directs the protein to the chloroplast; sequence MSSEHISGGGASKTKKHKWSSSQNRPKPMGVS. 3 disordered regions span residues 1 to 48, 93 to 127, and 400 to 487; these read MSSE…NSFA, ANPGGSMAKSGVVGRSKKVKTGNGGGKKSGHGADK, and KNEA…DNGN. The Bromo domain occupies 127-233; sequence KGTVQIFKNC…NMFEDKWVSI (107 aa). The 82-residue stretch at 320–401 folds into the NET domain; that stretch reads EEEAPVNNRD…GYKESLSKKN (82 aa). Over residues 400-414 the composition is skewed to basic and acidic residues; it reads KNEAHGFGSERDAES. Polar residues predominate over residues 415–435; that stretch reads VHNSIQEPTTLVSGTTTSRVT. Residues 451 to 487 are compositionally biased toward low complexity; it reads NNASGSSSSNSSSSDSGSCSSDTDSDSSSGRGSDNGN.

Interacts with SIZ1 (via PHD domain). Post-translationally, sumoylated by SIZ1.

The protein resides in the plastid. It is found in the chloroplast. The chain is Transcription factor GTE5, chloroplastic (GTE5) from Arabidopsis thaliana (Mouse-ear cress).